The chain runs to 115 residues: Large ribosomal subunit protein bL21 (115 aa).

It belongs to the bacterial ribosomal protein bL21 family. Part of the 50S ribosomal subunit. Contacts protein L20.

This protein binds to 23S rRNA in the presence of protein L20. In Picosynechococcus sp. (strain ATCC 27264 / PCC 7002 / PR-6) (Agmenellum quadruplicatum), this protein is Large ribosomal subunit protein bL21.